A 203-amino-acid chain; its full sequence is Nucleoside triphosphate pyrophosphatase (203 aa).

Aspartate 78 functions as the Proton acceptor in the catalytic mechanism.

The protein belongs to the Maf family. Requires a divalent metal cation as cofactor.

The protein resides in the cytoplasm. The catalysed reaction is a ribonucleoside 5'-triphosphate + H2O = a ribonucleoside 5'-phosphate + diphosphate + H(+). The enzyme catalyses a 2'-deoxyribonucleoside 5'-triphosphate + H2O = a 2'-deoxyribonucleoside 5'-phosphate + diphosphate + H(+). Functionally, nucleoside triphosphate pyrophosphatase. May have a dual role in cell division arrest and in preventing the incorporation of modified nucleotides into cellular nucleic acids. The sequence is that of Nucleoside triphosphate pyrophosphatase from Prochlorococcus marinus (strain AS9601).